Here is a 483-residue protein sequence, read N- to C-terminus: MAATDLERFSNAEPEPRSLSLGGHVGFDSLPDQLVSKSVTQGFSFNILCVGETGIGKSTLMNTLFNTTFETEEASHHEACVRLRPQTYDLQESNVQLKLTIVDAVGFGDQINKDESYRPIVDYIDAQFENYLQEELKIRRSLFDYHDTRIHVCLYFITPTGHSLKSLDLVTMKKLDSKVNIIPIIAKADTISKSELHKFKIKIMGELVSNGVQIYQFPTDDEAVAEINAVMNAHLPFAVVGSTEEVKVGNKLVRARQYPWGVVQVENENHCDFVKLREMLIRVNMEDLREQTHSRHYELYRRCKLEEMGFQDSDGDSQPFSLQETYEAKRKEFLSELQRKEEEMRQMFVNKVKETELELKEKERELHEKFEHLKRVHQEEKRKVEEKRRELEEETNAFNRRKAAVEALQSQALHATSQQPLRKDKDKKNRSDIGAHQPGMSLSSSKVMMTKASVEPLNCSSWWPAIQCCSCLVRDATWREGFL.

Positions 1–16 are enriched in basic and acidic residues; it reads MAATDLERFSNAEPEP. A disordered region spans residues 1–22; it reads MAATDLERFSNAEPEPRSLSLG. Position 2 is an N-acetylalanine (Ala2). Ser10 bears the Phosphoserine mark. The 267-residue stretch at 41–307 folds into the Septin-type G domain; the sequence is QGFSFNILCV…ELYRRCKLEE (267 aa). The G1 motif stretch occupies residues 51-58; that stretch reads GETGIGKS. GTP-binding positions include 51-58, Gly106, 187-195, Gly241, and Arg256; these read GETGIGKS and KADTISKSE. The interval 103–106 is G3 motif; sequence DAVG. The interval 186–189 is G4 motif; sequence AKAD. The stretch at 320–413 forms a coiled coil; that stretch reads FSLQETYEAK…AVEALQSQAL (94 aa). Over residues 411-420 the composition is skewed to polar residues; the sequence is QALHATSQQP. Residues 411 to 443 are disordered; that stretch reads QALHATSQQPLRKDKDKKNRSDIGAHQPGMSLS. Residues 421–433 are compositionally biased toward basic and acidic residues; the sequence is LRKDKDKKNRSDI.

Belongs to the TRAFAC class TrmE-Era-EngA-EngB-Septin-like GTPase superfamily. Septin GTPase family. As to quaternary structure, septins polymerize into heterooligomeric protein complexes that form filaments, and can associate with cellular membranes, actin filaments and microtubules. GTPase activity is required for filament formation. Interacts with CDK14. Interacts with SEPTIN5. Interacts with SEPTIN7. Interacts with SEPTIN4. Interacts with VAMP2; the interaction inhibits interaction of VAMP2 with SYP. Interacts with STX1A. Widely expressed, including in brain, heart and platelets; most abundant in aorta. Isoform 2 is expressed at low levels in specific brain areas, such as occipital pole, frontal lobe, temporal lobe and putamen. Isoform 1 and 3 are highly expressed in specific brain areas, such as occipital pole, frontal lobe, temporal lobe and putamen. Isoform 2 is highly expressed in prostate, testis and ovary. Isoform 1 and isoform 3 are expressed at low levels in prostate, testis and ovary.

The protein resides in the cytoplasm. It is found in the cytoskeleton. It localises to the synapse. The protein localises to the cell projection. Its subcellular location is the axon. The protein resides in the cytoplasmic vesicle. It is found in the secretory vesicle. It localises to the synaptic vesicle membrane. The protein localises to the presynapse. Filament-forming cytoskeletal GTPase. May play a role in platelet secretion. Seems to participate in the process of SNARE complex formation in synaptic vesicles. Its function is as follows. Stabilizes BACE1 protein levels and promotes the sorting and accumulation of BACE1 to the recycling or endosomal compartments, modulating the beta-amyloidogenic processing of APP. The chain is Septin-8 from Homo sapiens (Human).